We begin with the raw amino-acid sequence, 273 residues long: Protein B4 (273 aa).

The tract at residues 1-24 (MAPKKAVAAPEGGNKENAAVKGSS) is disordered. In terms of domain architecture, H15 spans 40 to 118 (SHPPTLSMVV…GATGRFKLAK (79 aa)). The disordered stretch occupies residues 120-273 (VKTTKAGKEN…AGKKGKKVTN (154 aa)). A compositionally biased stretch (basic and acidic residues) spans 154–256 (AKTEKEPKGE…KDVKAQKDST (103 aa)). 3 repeat units span residues 189 to 198 (KEAKEVDKAN), 199 to 208 (KEAKEVDKAN), and 209 to 217 (KEAKEVDKA). Positions 189-217 (KEAKEVDKANKEAKEVDKANKEAKEVDKA) are 3 X 10 AA tandem repeats. Residues 264 to 273 (AGKKGKKVTN) show a composition bias toward basic residues.

This sequence belongs to the histone H1/H5 family. Interacts with nap1l1.

It is found in the nucleus. It localises to the chromosome. The protein is Protein B4 (b4) of Xenopus laevis (African clawed frog).